The sequence spans 463 residues: 4-hydroxybenzoate polyprenyltransferase, mitochondrial (463 aa).

2 disordered regions span residues 28 to 48 (NNNT…STFN) and 133 to 152 (LLDD…NNKP). Positions 137–150 (NNSNSNNNNNSNNN) are enriched in low complexity. Transmembrane regions (helical) follow at residues 181 to 201 (IGVW…APAG), 206 to 226 (LKTM…GCVI), 257 to 277 (LIFL…SLNY), 305 to 325 (FVLG…IAGS), 330 to 350 (IVAP…TIYA), 375 to 395 (IILS…GIAA), and 431 to 451 (FISN…SKLL).

The protein belongs to the UbiA prenyltransferase family. Mg(2+) is required as a cofactor.

It is found in the mitochondrion inner membrane. The catalysed reaction is an all-trans-polyprenyl diphosphate + 4-hydroxybenzoate = a 4-hydroxy-3-(all-trans-polyprenyl)benzoate + diphosphate. It functions in the pathway cofactor biosynthesis; ubiquinone biosynthesis. In terms of biological role, catalyzes the prenylation of para-hydroxybenzoate (PHB) with an all-trans polyprenyl group. Mediates the second step in the final reaction sequence of coenzyme Q (CoQ) biosynthesis, which is the condensation of the polyisoprenoid side chain with PHB. Catalyzes the prenylation of para-hydroxybenzoate (PHB) with an all-trans polyprenyl group. Mediates the second step in the final reaction sequence of coenzyme Q (CoQ) biosynthesis, which is the condensation of the polyisoprenoid side chain with PHB, generating the first membrane-bound Q intermediate. In Dictyostelium discoideum (Social amoeba), this protein is 4-hydroxybenzoate polyprenyltransferase, mitochondrial.